Here is a 90-residue protein sequence, read N- to C-terminus: MKFIFIGLIKFYRSAISPFTPSSCRFYPTCSEYGLEAIKRFGAFKGGILTIKRISKCHPFHPGGVDVVPDKVKNINNEKHLEKGVIRNED.

This sequence belongs to the UPF0161 family.

It localises to the cell membrane. Could be involved in insertion of integral membrane proteins into the membrane. This is Putative membrane protein insertion efficiency factor from Oceanobacillus iheyensis (strain DSM 14371 / CIP 107618 / JCM 11309 / KCTC 3954 / HTE831).